Consider the following 591-residue polypeptide: Dolichyl-phosphooligosaccharide-protein glycotransferase 1 (591 aa).

Residues methionine 1 to valine 5 lie on the Cytoplasmic side of the membrane. A helical transmembrane segment spans residues leucine 6–phenylalanine 26. The Extracellular segment spans residues aspartate 27 to lysine 67. Positions glycine 34 to aspartate 36 match the DXD motif 1 motif. Aspartate 36 contributes to the Mn(2+) binding site. Residues isoleucine 68–histidine 88 form a helical membrane-spanning segment. Topologically, residues serine 89–glutamate 91 are cytoplasmic. Residues isoleucine 92 to threonine 112 traverse the membrane as a helical segment. At alanine 113–threonine 121 the chain is on the extracellular side. The chain crosses the membrane as a helical span at residues phenylalanine 122–leucine 142. Over glycine 143 to histidine 147 the chain is Cytoplasmic. Aspartate 146 serves as a coordination point for Mn(2+). The DXD motif 2 motif lies at aspartate 146 to histidine 148. Histidine 147 lines the a glycophospholipid pocket. Residue histidine 148 participates in Mn(2+) binding. The helical transmembrane segment at histidine 148–tryptophan 168 threads the bilayer. Residue lysine 169 is a topological domain, extracellular. A helical transmembrane segment spans residues isoleucine 170–glycine 190. Over alanine 191 to serine 219 the chain is Cytoplasmic. A helical transmembrane segment spans residues phenylalanine 220–glycine 240. Residues serine 241–asparagine 252 are Extracellular-facing. Residues alanine 253 to leucine 273 traverse the membrane as a helical segment. Topologically, residues proline 274–histidine 275 are cytoplasmic. Residues phenylalanine 276–isoleucine 296 form a helical membrane-spanning segment. Positions threonine 295–glutamate 298 match the TIXE motif motif. The Extracellular segment spans residues serine 297–glutamine 303. A helical membrane pass occupies residues isoleucine 304–leucine 324. Over phenylalanine 325–arginine 327 the chain is Cytoplasmic. The chain crosses the membrane as a helical span at residues asparagine 328–methionine 344. The Extracellular segment spans residues glutamine 345–arginine 347. Residue arginine 347 coordinates a glycophospholipid. A helical transmembrane segment spans residues phenylalanine 348–leucine 368. Residues glutamate 369 to alanine 408 are Cytoplasmic-facing. A helical transmembrane segment spans residues valine 409–phenylalanine 429. At aspartate 430–serine 591 the chain is on the extracellular side. Positions tryptophan 465–aspartate 467 are interacts with target acceptor peptide in protein substrate. Positions tryptophan 465–glycine 469 match the WWDYG motif motif. A DKi motif motif is present at residues glutamate 521–isoleucine 535.

The protein belongs to the STT3 family. The cofactor is Mn(2+). It depends on Mg(2+) as a cofactor. Requires Zn(2+) as cofactor.

Its subcellular location is the cell membrane. The catalysed reaction is an archaeal dolichyl phosphooligosaccharide + [protein]-L-asparagine = an archaeal dolichyl phosphate + a glycoprotein with the oligosaccharide chain attached by N-beta-D-glycosyl linkage to a protein L-asparagine.. It participates in protein modification; protein glycosylation. Its function is as follows. Oligosaccharyl transferase (OST) that catalyzes the initial transfer of a defined glycan (a GalNAc-linked heptasaccharide composed of 4 Hex, 3 dHex and a sulfate for A.fulgidus AglB-S) from the lipid carrier dolichol-monophosphate to an asparagine residue within an Asn-X-Ser/Thr consensus motif in nascent polypeptide chains, the first step in protein N-glycosylation. The polypeptide is Dolichyl-phosphooligosaccharide-protein glycotransferase 1 (aglB1) (Archaeoglobus fulgidus (strain ATCC 49558 / DSM 4304 / JCM 9628 / NBRC 100126 / VC-16)).